Consider the following 730-residue polypeptide: Guanylate cyclase soluble subunit alpha-2 (730 aa).

Residues 1 to 53 (MSRRKISSESFSSLGSDYLETSPEEEGECPLSKLCWNGSRSPPGPPGSRAAAM) are disordered. The Guanylate cyclase domain maps to 519–646 (TMLFSDIVGF…NNVTLASKFE (128 aa)).

This sequence belongs to the adenylyl cyclase class-4/guanylyl cyclase family. In terms of assembly, heterodimer of an alpha and a beta chain.

It localises to the cytoplasm. It catalyses the reaction GTP = 3',5'-cyclic GMP + diphosphate. Its activity is regulated as follows. Activated by nitric oxide in the presence of magnesium or manganese ions. Functionally, has guanylyl cyclase on binding to the beta-1 subunit. The polypeptide is Guanylate cyclase soluble subunit alpha-2 (Gucy1a2) (Rattus norvegicus (Rat)).